Reading from the N-terminus, the 335-residue chain is Selenide, water dikinase (335 aa).

Residue Sec7 is part of the active site. Residue Sec7 is a non-standard amino acid, selenocysteine. Residues Lys10 and 36-38 each bind ATP; that span reads LGD. Asp39 provides a ligand contact to Mg(2+). ATP is bound by residues Asp55, Asp78, and 126–128; that span reads GHT. A Mg(2+)-binding site is contributed by Asp78. Residue Asp232 coordinates Mg(2+).

It belongs to the selenophosphate synthase 1 family. Class I subfamily. As to quaternary structure, homodimer. Requires Mg(2+) as cofactor.

The enzyme catalyses hydrogenselenide + ATP + H2O = selenophosphate + AMP + phosphate + 2 H(+). In terms of biological role, synthesizes selenophosphate from selenide and ATP. The protein is Selenide, water dikinase of Methanococcus maripaludis (strain DSM 14266 / JCM 13030 / NBRC 101832 / S2 / LL).